The following is a 237-amino-acid chain: Large ribosomal subunit protein uL3 (237 aa).

Disordered regions lie at residues 133 to 155 (ASHG…DPGK) and 213 to 237 (PENA…EGGE). Over residues 135–150 (HGNSITHRSHGSTGQR) the composition is skewed to polar residues. N5-methylglutamine is present on Q151. The segment covering 220–237 (AGLRAGAKAEAAATEGGE) has biased composition (low complexity).

The protein belongs to the universal ribosomal protein uL3 family. In terms of assembly, part of the 50S ribosomal subunit. Forms a cluster with proteins L14 and L19. Methylated by PrmB.

Functionally, one of the primary rRNA binding proteins, it binds directly near the 3'-end of the 23S rRNA, where it nucleates assembly of the 50S subunit. This is Large ribosomal subunit protein uL3 from Brucella abortus (strain S19).